We begin with the raw amino-acid sequence, 76 residues long: Conotoxin Cal29b (76 aa).

The signal sequence occupies residues 1 to 43 (MKLTCVLIVAVLILAACQFTAANMARYGKTQIARSDVKSIDAR).

It belongs to the conotoxin O1 superfamily. May contain 4 disulfide bonds. Expressed by the venom duct.

Its subcellular location is the secreted. In terms of biological role, is able to inhibit the growth of Mycobacterium tuberculosis (MIC=0.22-3.52 uM against strain H37Rv and 2 multidrug-resistant strains). May also show neurotoxic activity. The polypeptide is Conotoxin Cal29b (Californiconus californicus (California cone)).